The chain runs to 132 residues: UPF0102 protein Acel_1550 (132 aa).

Belongs to the UPF0102 family.

The protein is UPF0102 protein Acel_1550 of Acidothermus cellulolyticus (strain ATCC 43068 / DSM 8971 / 11B).